The following is a 203-amino-acid chain: Vexin (203 aa).

Over residues 59–70 (HRTDRRDGEGRW) the composition is skewed to basic and acidic residues. The tract at residues 59-101 (HRTDRRDGEGRWSGRFQNPRLQGPHPAKTPARPVGTSEPKSAN) is disordered.

This sequence belongs to the vexin family.

The protein localises to the cell membrane. It localises to the nucleus. In terms of biological role, required for neurogenesis in the neural plate and retina. Strongly cooperates with neural bHLH factors to promote neurogenesis. This is Vexin from Bos taurus (Bovine).